The following is a 398-amino-acid chain: Ethanolaminephosphotransferase 1 (398 aa).

The residue at position 2 (Ala-2) is an N-acetylalanine. A run of 10 helical transmembrane segments spans residues Trp-47–Thr-69, His-84–Leu-103, Leu-123–Gly-145, Gly-150–Trp-172, Val-179–Ala-201, Leu-221–Phe-243, Val-256–Leu-278, Ile-291–Cys-310, Thr-319–Ser-341, and Ser-345–Val-367. Sec-388 is a non-standard amino acid (selenocysteine).

It belongs to the CDP-alcohol phosphatidyltransferase class-I family. The cofactor is Mg(2+). It depends on Mn(2+) as a cofactor.

It is found in the endoplasmic reticulum membrane. It catalyses the reaction CDP-ethanolamine + a 1,2-diacyl-sn-glycerol = a 1,2-diacyl-sn-glycero-3-phosphoethanolamine + CMP + H(+). The enzyme catalyses 1-O-alkyl-2-acyl-sn-glycerol + CDP-ethanolamine = a 1-O-alkyl-2-acyl-sn-glycero-3-phosphoethanolamine + CMP + H(+). It participates in phospholipid metabolism; phosphatidylethanolamine biosynthesis; phosphatidylethanolamine from ethanolamine: step 3/3. Functionally, ethanolaminephosphotransferase that catalyzes the transfer of phosphoethanolamine (PE) from CDP-ethanolamine to lipid acceptors, the final step in the synthesis of PE via the 'Kennedy' pathway. PE is the second most abundant phospholipid of membranes in mammals and is involved in various membrane-related cellular processes. The enzyme is critical for the synthesis of several PE species and also catalyzes the synthesis of plasmanyl-PE, a lipid required for proper myelination and neurodevelopment, from 1-alkyl-2-acylglycerol. The protein is Ethanolaminephosphotransferase 1 of Mus musculus (Mouse).